Reading from the N-terminus, the 772-residue chain is Phosphatidylinositol 4-phosphate 5-kinase 5 (772 aa).

Residues 22-56 are disordered; the sequence is AKKRANSVFGTVSVAPHTDNDTTTDDNDDETTTNR. A compositionally biased stretch (acidic residues) spans 43-52; that stretch reads TTTDDNDDET. MORN repeat units lie at residues 75–97, 98–120, 121–143, 144–166, 167–189, 190–212, 213–235, and 236–257; these read YTGQ…DGCM, YIGD…SGAT, YEGE…SGDA, YKGQ…NGDA, YDGE…DGSY, YIGE…NGNR, YDGF…NGSF, and YVGH…SGNE. One can recognise a PIPK domain in the interval 377-768; sequence SKGHRNYELM…RFRDFIFKVF (392 aa). Residues 646–665 are disordered; it reads SGARTPIGESEEESGPRLSR. The tract at residues 728–749 is activation loop; that stretch reads YDISKKLEHAYKSIQYDPSSIS.

It catalyses the reaction a 1,2-diacyl-sn-glycero-3-phospho-(1D-myo-inositol 4-phosphate) + ATP = a 1,2-diacyl-sn-glycero-3-phospho-(1D-myo-inositol-4,5-bisphosphate) + ADP + H(+). The polypeptide is Phosphatidylinositol 4-phosphate 5-kinase 5 (PIP5K5) (Arabidopsis thaliana (Mouse-ear cress)).